A 72-amino-acid polypeptide reads, in one-letter code: Alpha-elapitoxin-Dpp2d (72 aa).

Intrachain disulfides connect Cys3-Cys21, Cys14-Cys42, Cys27-Cys31, Cys46-Cys57, and Cys58-Cys63. Arg72 carries the post-translational modification Arginine amide.

It belongs to the three-finger toxin family. Long-chain subfamily. Type II alpha-neurotoxin sub-subfamily. As to quaternary structure, monomer (predominant). In terms of processing, amidation does not significantly affect toxin selectivity, since the activity profile and binding data are reminiscent of classical long-chain 3-finger toxins with a free carboxyl termini. In terms of tissue distribution, expressed by the venom gland.

The protein resides in the secreted. Functionally, binds with high affinity to muscular (IC(50)=114 nM) and neuronal (alpha-7/CHRNA7) (IC(50)=58 nM) nicotinic acetylcholine receptor (nAChR) and inhibits acetylcholine from binding to the receptor, thereby impairing neuromuscular and neuronal transmission. Competitive radioligand binding assays also demonstrate that this toxin competes with epibatidine binding to the Lymnaea stagnalis acetylcholine-binding protein (Ls-AChBP) (IC(50)=4.9 nM). This chain is Alpha-elapitoxin-Dpp2d, found in Dendroaspis polylepis polylepis (Black mamba).